A 218-amino-acid chain; its full sequence is Small ribosomal subunit protein uS3c (218 aa).

Residues Val-47–Ala-118 enclose the KH type-2 domain.

It belongs to the universal ribosomal protein uS3 family. Part of the 30S ribosomal subunit.

It is found in the plastid. The protein localises to the chloroplast. The protein is Small ribosomal subunit protein uS3c (rps3) of Nicotiana sylvestris (Wood tobacco).